The following is a 603-amino-acid chain: Elongation factor 4 (603 aa).

The tr-type G domain maps to 7–189; sequence SRIRNFSIIA…AIVQQVPPPA (183 aa). Residues 19-24 and 136-139 each bind GTP; these read DHGKST and NKID.

This sequence belongs to the TRAFAC class translation factor GTPase superfamily. Classic translation factor GTPase family. LepA subfamily.

The protein localises to the cell inner membrane. The enzyme catalyses GTP + H2O = GDP + phosphate + H(+). Its function is as follows. Required for accurate and efficient protein synthesis under certain stress conditions. May act as a fidelity factor of the translation reaction, by catalyzing a one-codon backward translocation of tRNAs on improperly translocated ribosomes. Back-translocation proceeds from a post-translocation (POST) complex to a pre-translocation (PRE) complex, thus giving elongation factor G a second chance to translocate the tRNAs correctly. Binds to ribosomes in a GTP-dependent manner. The polypeptide is Elongation factor 4 (Synechocystis sp. (strain ATCC 27184 / PCC 6803 / Kazusa)).